A 469-amino-acid chain; its full sequence is Citrate synthase, mitochondrial (469 aa).

A mitochondrion-targeting transit peptide spans 1–28 (MAFFRTVTKLRSRLGQPPSLRDSVRCLQ). Catalysis depends on residues H304, H350, and D405.

Belongs to the citrate synthase family. As to quaternary structure, homodimer.

The protein resides in the mitochondrion matrix. It catalyses the reaction oxaloacetate + acetyl-CoA + H2O = citrate + CoA + H(+). It participates in carbohydrate metabolism; tricarboxylic acid cycle; isocitrate from oxaloacetate: step 1/2. This chain is Citrate synthase, mitochondrial (MCSI), found in Fragaria ananassa (Strawberry).